The following is a 479-amino-acid chain: tRNA modification GTPase MnmE (479 aa).

Residues Arg30, Glu91, and Lys130 each contribute to the (6S)-5-formyl-5,6,7,8-tetrahydrofolate site. A TrmE-type G domain is found at 226-402 (GFRIVLTGLP…VLKDLVKEFA (177 aa)). Asn236 lines the K(+) pocket. Residues 236–241 (NVGKSS), 255–261 (TDIPGTT), and 280–283 (DTAG) each bind GTP. Position 240 (Ser240) interacts with Mg(2+). 3 residues coordinate K(+): Thr255, Ile257, and Thr260. A Mg(2+)-binding site is contributed by Thr261. Lys479 contributes to the (6S)-5-formyl-5,6,7,8-tetrahydrofolate binding site.

It belongs to the TRAFAC class TrmE-Era-EngA-EngB-Septin-like GTPase superfamily. TrmE GTPase family. As to quaternary structure, homodimer. Heterotetramer of two MnmE and two MnmG subunits. Requires K(+) as cofactor.

Its subcellular location is the cytoplasm. In terms of biological role, exhibits a very high intrinsic GTPase hydrolysis rate. Involved in the addition of a carboxymethylaminomethyl (cmnm) group at the wobble position (U34) of certain tRNAs, forming tRNA-cmnm(5)s(2)U34. The sequence is that of tRNA modification GTPase MnmE from Bdellovibrio bacteriovorus (strain ATCC 15356 / DSM 50701 / NCIMB 9529 / HD100).